A 508-amino-acid polypeptide reads, in one-letter code: Heat shock 70 kDa protein 14 (508 aa).

It belongs to the heat shock protein 70 family. As to quaternary structure, component of ribosome-associated complex (RAC).

The protein resides in the cytoplasm. It localises to the cytosol. In terms of biological role, component of the ribosome-associated complex (RAC), a complex involved in folding or maintaining nascent polypeptides in a folding-competent state. The polypeptide is Heat shock 70 kDa protein 14 (hspa14) (Xenopus tropicalis (Western clawed frog)).